A 145-amino-acid chain; its full sequence is YIDAETMHLHHDKHHQTYVNNANAALEKHPEIGEDLEALLADVESIPADIRQALINNGGGHLNHALFWELMTPEKTAPSAELAAAIDATFGSFEEFQAAFTAAATTRFGSGWAWLVVNKEGKLEVTSTANQDTPISEGKKPILGL.

Positions 10 and 64 each coordinate Fe(3+). Mn(2+) contacts are provided by His10 and His64. A disordered region spans residues 126–145; it reads TSTANQDTPISEGKKPILGL.

It belongs to the iron/manganese superoxide dismutase family. It depends on Mn(2+) as a cofactor. The cofactor is Fe(3+).

The catalysed reaction is 2 superoxide + 2 H(+) = H2O2 + O2. Its function is as follows. Destroys superoxide anion radicals which are normally produced within the cells and which are toxic to biological systems. Catalyzes the dismutation of superoxide anion radicals into O2 and H2O2 by successive reduction and oxidation of the transition metal ion at the active site. This chain is Superoxide dismutase [Mn/Fe] (sodA), found in Streptococcus mitis.